The primary structure comprises 354 residues: Replication-associated protein (354 aa).

The CRESS-DNA virus Rep endonuclease domain occupies 11 to 114 (SHRSPNTFLT…PLALFERGTF (104 aa)). Residues 18-21 (FLTY) carry the RCR-1 motif. Residues Glu52 and His62 each coordinate a divalent metal cation. Positions 60–65 (CLHALI) match the RCR-2 motif. The active-site For DNA cleavage activity is Tyr100. The short motif at 100 to 103 (YITK) is the RCR-3 element. Position 104 (Glu104) interacts with a divalent metal cation. An oligomerization region spans residues 175–187 (SANKLFPDIQEEF). An ATP-binding site is contributed by 228 to 235 (GPTRTGKS). Residues 251 to 269 (VDWSSYNEDTIYNIVDDIP) form a transactivation region. The Nuclear localization signal signature appears at 291–302 (KYGKKKKVQMKS).

The protein belongs to the geminiviridae Rep protein family. In terms of assembly, homooligomer. Rep binds to repeated DNA motifs (iterons). Forms the O-complex, which is a Rep-DNA complex involved in the initiation of RCR. Part of the C- and V-complexes which are RepA-Rep-DNA complexes involved in the c-sense and v-sense transcription. Mg(2+) serves as cofactor. It depends on Mn(2+) as a cofactor.

The protein localises to the host nucleus. Functionally, essential for the replication of viral ssDNA. The closed circular ssDNA genome is first converted to a superhelical dsDNA. Rep binds a specific region at the genome origin of replication. It introduces an endonucleolytic nick within the conserved sequence 5'-TAATATTAC-3' in the intergenic region of the genome present in all geminiviruses, thereby initiating the rolling circle replication (RCR). Following cleavage, binds covalently to the 5'-phosphate of DNA as a tyrosyl ester. The cleavage gives rise to a free 3'-OH that serves as a primer for the cellular DNA polymerase. The polymerase synthesizes the (+) strand DNA by rolling circle mechanism. After one round of replication, a Rep-catalyzed nucleotidyl transfer reaction releases a circular single-stranded virus genome, thereby terminating the replication. Displays origin-specific DNA cleavage, nucleotidyl transferase, ATPase and helicase activities. Acts as an inhibitor of C-sense gene transcription. The sequence is that of Replication-associated protein from Maize streak virus genotype C (isolate Set) (MSV).